Here is a 328-residue protein sequence, read N- to C-terminus: Purple acid phosphatase 7 (328 aa).

An N-terminal signal peptide occupies residues 1–24 (MKMHVCFSVILMFLSIFFINGALS). Asp48 serves as a coordination point for Fe cation. N-linked (GlcNAc...) asparagine glycosylation is present at Asn56. Residues Asp81 and Tyr84 each contribute to the Fe cation site. Asp81 is a binding site for Zn(2+). Zn(2+) is bound by residues Asn119 and His213. His222 (proton donor) is an active-site residue. His248 contributes to the Zn(2+) binding site. Residue 248-250 (HDH) coordinates substrate. His250 is a binding site for Fe cation.

Belongs to the metallophosphoesterase superfamily. Purple acid phosphatase family. As to quaternary structure, homodimer. Requires Fe cation as cofactor. Zn(2+) is required as a cofactor. As to expression, expressed in roots, stems, leaves, flowers and siliques.

The protein localises to the secreted. It carries out the reaction a phosphate monoester + H2O = an alcohol + phosphate. The protein is Purple acid phosphatase 7 (PAP7) of Arabidopsis thaliana (Mouse-ear cress).